The primary structure comprises 605 residues: Tungsten-containing aldehyde ferredoxin oxidoreductase (605 aa).

Residues arginine 76, asparagine 93, glycine 95, arginine 182, alanine 183, glycine 185, and arginine 186 each coordinate tungstopterin. Residues cysteine 288, cysteine 291, and cysteine 295 each coordinate [4Fe-4S] cluster. Tungstopterin contacts are provided by aspartate 338, leucine 342, aspartate 343, arginine 444, lysine 450, aspartate 489, and leucine 493. Cysteine 494 is a binding site for [4Fe-4S] cluster. A tungstopterin-binding site is contributed by leucine 495.

The protein belongs to the AOR/FOR family. Monomer. Homodimer. Requires [4Fe-4S] cluster as cofactor. Tungstopterin is required as a cofactor.

It carries out the reaction an aldehyde + 2 oxidized [2Fe-2S]-[ferredoxin] + H2O = a carboxylate + 2 reduced [2Fe-2S]-[ferredoxin] + 3 H(+). With respect to regulation, inhibited by arsenite, iodoacetate and cyanide. Functionally, aldehyde ferredoxin oxidoreductase with a broad substrate specificity. Catalyzes the oxidation of a range of aliphatic aldehydes to their corresponding carboxylic acids. In vitro can use crotonaldehyde, acetaldehyde, formaldehyde, butyraldehyde or glyceraldehyde as substrate, using methyl viologen or ferredoxin, but not NAD(P), as the electron acceptor. Does not oxidize glucose or glyceraldehyde 3-phosphate. May be involved in a pyroglycolytic pathway. This is Tungsten-containing aldehyde ferredoxin oxidoreductase from Pyrococcus furiosus (strain ATCC 43587 / DSM 3638 / JCM 8422 / Vc1).